An 820-amino-acid polypeptide reads, in one-letter code: Leucine--tRNA ligase (820 aa).

The 'HIGH' region signature appears at 42–52 (PYPSGDLHMGH). The 'KMSKS' region signature appears at 576–580 (KMSKS). K579 lines the ATP pocket.

The protein belongs to the class-I aminoacyl-tRNA synthetase family.

It is found in the cytoplasm. The catalysed reaction is tRNA(Leu) + L-leucine + ATP = L-leucyl-tRNA(Leu) + AMP + diphosphate. The protein is Leucine--tRNA ligase of Coxiella burnetii (strain RSA 331 / Henzerling II).